The sequence spans 510 residues: Peptide transporter imqJ (510 aa).

A run of 3 helical transmembrane segments spans residues 1–21 (MVNQAFMLWCYITPVLGAVVA), 31–51 (IIFSSSVYLCGLVTLFLSSLP), and 57–77 (GISLPGLLVSLFLIGIGTGGI). Asn80 carries N-linked (GlcNAc...) asparagine glycosylation. A run of 4 helical transmembrane segments spans residues 116–136 (IFTTFFLYINIGSFSPLLITI), 143–163 (FSAAFSLSAITFSIGFIIVLV), 231–251 (IFILYPIYWAAYSQFLTNFIS), and 269–289 (IDPITVLILLPVLDRIVFPFL). In terms of domain architecture, Fe2OG dioxygenase spans 348 to 468 (PAASEIRLLY…RCSSVFFFKA (121 aa)). 2 residues coordinate Fe cation: His377 and Asp379. Asn421 is a glycosylation site (N-linked (GlcNAc...) asparagine). A Fe cation-binding site is contributed by His439. Arg459 is a 2-oxoglutarate binding site.

Belongs to the major facilitator superfamily. Proton-dependent oligopeptide transporter (POT/PTR) (TC 2.A.17) family.

The protein resides in the membrane. Functionally, peptide transporter; part of the gene cluster that mediates the biosynthesis of imizoquins A to D, tripeptide-derived alkaloids that serve a protective role against oxidative stress that are essential for normal germination. The protein is Peptide transporter imqJ of Aspergillus flavus (strain ATCC 200026 / FGSC A1120 / IAM 13836 / NRRL 3357 / JCM 12722 / SRRC 167).